The sequence spans 330 residues: MTLLPDPQHPLEEAEAEAAFAAILDGAVADEAIARFLVGLSDRGENASEIAGAARAMRARMIPIKAPANAIDVCGTGGDGHHTLNVSTAVSLVVAACGVPVAKHGNRAASSKAGAADTLEALGLNLDRAAETAEETLADLGICFLFAARHHPSMGRIMPIRKALGRRTIFNLMGPLANPANVRRQLVGIARPAYVPIYAEAILRLGTDHSFVISGDEGLDELSLAGGNELAEVRDGEISMRRVTPADAGLPESAVTAIRGGDAAHNARALRALLEGEHGPYRNAVLFNAAAALIIAGEAQDWHEGVEEAAEAIDKGLANALLNCWIAALE.

Residues Gly-75, 78-79, Thr-83, 85-88, 103-111, and Ala-115 contribute to the 5-phospho-alpha-D-ribose 1-diphosphate site; these read GD, NVST, and KHGNRAASS. An anthranilate-binding site is contributed by Gly-75. Ser-87 provides a ligand contact to Mg(2+). Asn-106 is an anthranilate binding site. Residue Arg-161 coordinates anthranilate. Mg(2+)-binding residues include Asp-220 and Glu-221.

The protein belongs to the anthranilate phosphoribosyltransferase family. In terms of assembly, homodimer. It depends on Mg(2+) as a cofactor.

It carries out the reaction N-(5-phospho-beta-D-ribosyl)anthranilate + diphosphate = 5-phospho-alpha-D-ribose 1-diphosphate + anthranilate. Its pathway is amino-acid biosynthesis; L-tryptophan biosynthesis; L-tryptophan from chorismate: step 2/5. In terms of biological role, catalyzes the transfer of the phosphoribosyl group of 5-phosphorylribose-1-pyrophosphate (PRPP) to anthranilate to yield N-(5'-phosphoribosyl)-anthranilate (PRA). The polypeptide is Anthranilate phosphoribosyltransferase (Novosphingobium aromaticivorans (strain ATCC 700278 / DSM 12444 / CCUG 56034 / CIP 105152 / NBRC 16084 / F199)).